Reading from the N-terminus, the 446-residue chain is 6-methylsalicylate 1-monooxygenase atA (446 aa).

A helical membrane pass occupies residues 7-27 (VSVAIIGGGIGGLSLAIGLLQ). FAD is bound by residues Glu-37 and Ala-50. Asn-107 is a glycosylation site (N-linked (GlcNAc...) asparagine). Residue Arg-116 participates in FAD binding. Residue Arg-200 is part of the active site. Asp-311 and Ala-324 together coordinate FAD.

It belongs to the paxM FAD-dependent monooxygenase family. The cofactor is FAD.

It localises to the membrane. It carries out the reaction 6-methylsalicylate + AH2 + O2 + H(+) = 3-methylcatechol + A + CO2 + H2O. It participates in secondary metabolite biosynthesis. 6-methylsalicylate 1-monooxygenase; part of the gene cluster that mediates the biosynthesis of terreic acid, a quinone epoxide inhibitor of Bruton's tyrosine kinase. The first step of the pathway is the synthesis of 6-methylsalicylic acid (6-MSA) by the 6-methylsalicylic acid synthase atX. In the biosynthesis of 6-MSA, atX utilizes one acetyl-CoA and three malonyl-CoAs as its substrates and catalyzes a series of programmed reactions including Claisen condensation, reduction, aldol cyclization, and the hydrolytic cleavage that yields 6-MSA. The 6-methylsalicylate 1-monooxygenase atA then catalyzes the decarboxylative hydroxylation of 6-MSA to 3-methylcatechol. The next step is the conversion of 3-methylcatechol to 3-methyl-1,2,4-benzenetriol by cytochrome P450 monooxygenase atE, which is enhanced by cytochrome P450 monooxygenase atG. Then, the epoxidase atD catalyzes the epoxidation and hydroxyl oxidation of 3-methyl-1,2,4-benzenetriol to terremutin. Lastly, GMC oxidoreductase atC oxidizes terremutin to terreic acid. This Aspergillus terreus (strain NIH 2624 / FGSC A1156) protein is 6-methylsalicylate 1-monooxygenase atA.